A 300-amino-acid chain; its full sequence is Urease accessory protein UreD (300 aa).

This sequence belongs to the UreD family. As to quaternary structure, ureD, UreF and UreG form a complex that acts as a GTP-hydrolysis-dependent molecular chaperone, activating the urease apoprotein by helping to assemble the nickel containing metallocenter of UreC. The UreE protein probably delivers the nickel.

Its subcellular location is the cytoplasm. Its function is as follows. Required for maturation of urease via the functional incorporation of the urease nickel metallocenter. This chain is Urease accessory protein UreD, found in Prochlorococcus marinus (strain AS9601).